The sequence spans 485 residues: Solute carrier family 35 member F4 (485 aa).

Polar residues-rich tracts occupy residues 32–42 and 50–64; these read SQKSTTRSSVT and CPSSHSSISRQLSPL. Disordered stretches follow at residues 32–64 and 78–111; these read SQKSTTRSSVTRCKPGPNCPSSHSSISRQLSPL and QSRGSSGVCGRRVERQSRSGDDGTQTRPESSSQE. The segment covering 88–98 has biased composition (basic and acidic residues); sequence RRVERQSRSGD. The span at 99–111 shows a compositional bias: polar residues; the sequence is DGTQTRPESSSQE. The next 10 membrane-spanning stretches (helical) occupy residues 129 to 149, 156 to 176, 217 to 234, 241 to 261, 265 to 285, 294 to 314, 329 to 349, 359 to 381, 383 to 405, and 414 to 434; these read IWGLLIILSVSSSWVGTTQIV, FYCPFFMTWFSTNWNIMFFPV, APFSILWTLTNYLYLLAL, DVSALFCCNKAFVFLLSWIVL, FMGVRIVAAIMAITGIVMMAY, IIGVAFAVGSASTSALYKVLF, FVSTLGFFNLIFISFTPIILY, FAALPWGCLCGMAGLWLAFNILV, VGVVLTYPILISIGTVLSVPGNA, and VIFNVVRLAATIIICIGFLLM. In terms of domain architecture, EamA spans 225–285; that stretch reads LTNYLYLLAL…AITGIVMMAY (61 aa).

Belongs to the SLC35F solute transporter family.

The protein resides in the membrane. Putative solute transporter. This chain is Solute carrier family 35 member F4 (Slc35f4), found in Mus musculus (Mouse).